Reading from the N-terminus, the 660-residue chain is MGPRPILLLFLMFLPMLLAPPPGQPSGRRRGRRSGGSGGGFWGDRVDSQPFAIPYIHPTNPFAPNVTAAAGAGPRVRQPVRPLGSAWRDQAQRPAAASRRRPTTAGAAPLTAVAPAHDTPPVPDVDSRGAILRRQYNLSTSPLTSSVATGTNLVLYAAPLSPLLPLQDGTNTHIMATEASNYAQYRVARATIRYRPLVPNAVGGYAISISFWPQTTPTPTSVDMNSITSTDVRILVQPGIASELVIPSERLHYRNQGWRSVETSGVAEEEATSGLVMLCIHGSPVNSYTNTPYTGALGLLDFALELEFRNLTPGNTNTRVSRYSSTARHRLRRGADGTAELTTTAATRFMKDLYFTSTNGVGEIGRGIALTLFNLADTLLGGLPTELISSAGGQLFYSRPVVSANGEPTVKLYTSVENAQQDKGIAIPNDIDLGESRVVIQDYDNQHEQDRPTPSPAPSRPFSVLRANDVLWLSLTAAEYDQSTYGSSTGPVYVSDSVTLVNVATGAQAVARSLDWTKVTLDGRPLSTIQQYSKIFFVLPLRGKLSFWEAGTTRPGYPYNYNTTASDQLLVENAAGHRVAISTYTTSLGAGPVSISAVAVLGPHSALALLEDTLDYPARAHTFDDFCPECRPLGLQGCAFQSTVAELQRLKMKVGKTREL.

A signal peptide spans 1 to 19; sequence MGPRPILLLFLMFLPMLLA. 2 disordered regions span residues 20–43 and 66–127; these read PPPG…GFWG and VTAA…DVDS. The short motif at 28–33 is the Nuclear localization signal element; that stretch reads RRRGRR. Low complexity predominate over residues 92–116; it reads QRPAAASRRRPTTAGAAPLTAVAPA. N-linked (GlcNAc...) asparagine; by host glycans are attached at residues Asn137 and Asn310. The segment at 368 to 394 is particle formation; the sequence is IALTLFNLADTLLGGLPTELISSAGGQ. The N-linked (GlcNAc...) asparagine; by host glycan is linked to Asn562. The segment at 585–610 is oligomerization; sequence TTSLGAGPVSISAVAVLGPHSALALL.

The protein belongs to the hepevirus capsid protein family. In terms of assembly, homodimer. Self-assembles to form the capsid. The capsid is dominated by dimers that define the 30 morphological units. Interacts with phosphorylated protein ORF3. Interacts with host TMEM134. Interacts with host ASGR1 and ASGR2; these interactions facilitate infection of host hepatocytes. In terms of processing, cleaved by host protease in the N-terminus. Post-translationally, N-glycosylated. Not N-glycosylated. The C-terminus of the capsid protein ORF2 is truncated in non-enveloped virions shedded in feces, probably due to host proteases.

Its subcellular location is the secreted. It localises to the virion. The protein resides in the host cytoplasm. It is found in the host endoplasmic reticulum. The protein localises to the host Golgi apparatus. Its subcellular location is the host cell surface. Its function is as follows. Plays a role in the inhibition of host antibody-mediated neutralization without blocking viral cell entry. Forms an icosahedral capsid with a T=1 symmetry and a 34 nm diameter. The capsid is composed of 60 copies linked to each other. Binds to the 5' end of the genomic RNA to mediate genome encapsidation. Binds to heparin surface proteoglycans (HSPGs) to mediate viral entry. Additionally, the interactions with host ASGR1 and ASGR2 facilitate viral infection of hepatocytes. Inhibits IFN production by blocking host TBK1-induced IRF3 phosphorylation. The nuclear form probably modulates host gene expression. This Bandicota bengalensis (lesser bandicoot rat) protein is Pro-secreted protein ORF2.